The chain runs to 471 residues: UDP-N-acetylmuramate--L-alanine ligase (471 aa).

Residue 114 to 120 (GTHGKTT) participates in ATP binding.

The protein belongs to the MurCDEF family.

Its subcellular location is the cytoplasm. It catalyses the reaction UDP-N-acetyl-alpha-D-muramate + L-alanine + ATP = UDP-N-acetyl-alpha-D-muramoyl-L-alanine + ADP + phosphate + H(+). Its pathway is cell wall biogenesis; peptidoglycan biosynthesis. Its function is as follows. Cell wall formation. The polypeptide is UDP-N-acetylmuramate--L-alanine ligase (Methylobacterium sp. (strain 4-46)).